A 120-amino-acid chain; its full sequence is NADH dehydrogenase [ubiquinone] 1 subunit C2 (120 aa).

A helical membrane pass occupies residues 57 to 76 (GLHRQLLFVTSFVFAGYFYL).

It belongs to the complex I NDUFC2 subunit family. In terms of assembly, complex I is composed of 45 different subunits. Interacts with TMEM242.

The protein resides in the mitochondrion inner membrane. Accessory subunit of the mitochondrial membrane respiratory chain NADH dehydrogenase (Complex I), that is believed not to be involved in catalysis but required for the complex assembly. Complex I functions in the transfer of electrons from NADH to the respiratory chain. The immediate electron acceptor for the enzyme is believed to be ubiquinone. The polypeptide is NADH dehydrogenase [ubiquinone] 1 subunit C2 (Mus musculus (Mouse)).